The following is a 2362-amino-acid chain: Filaggrin-2 (2362 aa).

Positions Met-1 to Leu-81 are S-100-like. EF-hand domains lie at Val-8 to Pro-43 and Asp-49 to Ala-84. Ca(2+)-binding residues include Asp-62, Asp-64, Asp-66, Arg-68, and Glu-73. Disordered regions lie at residues Ala-96–Cys-238 and Gly-284–Pro-2109. Positions Glu-111–Glu-120 are enriched in acidic residues. Composition is skewed to basic and acidic residues over residues Lys-159–Arg-174 and Asn-189–Glu-214. Filaggrin repeat units lie at residues Gly-261 to Cys-308 and His-373 to Phe-414. 3 stretches are compositionally biased toward polar residues: residues Gly-284 to Gly-317, Ser-342 to Ser-375, and Gly-383 to Met-395. Residues Ser-396–Ser-411 show a composition bias toward low complexity. Composition is skewed to polar residues over residues Ala-421–Phe-443 and Ser-450–Ser-469. 3 stretches are compositionally biased toward low complexity: residues Gly-474 to Gly-519, Gly-539 to Gly-550, and Ser-567 to Gln-580. A Filaggrin 3 repeat occupies Gln-555–Gln-607. Over residues Gln-581–Thr-590 the composition is skewed to gly residues. Positions Ser-599–Ser-618 are enriched in low complexity. A compositionally biased stretch (gly residues) spans Gly-632 to Glu-653. The span at His-654 to Ser-675 shows a compositional bias: low complexity. A Filaggrin 4 repeat occupies Gly-672–Ser-723. Positions Thr-682–Gly-694 are enriched in gly residues. 3 stretches are compositionally biased toward low complexity: residues Ser-695–His-705, Gly-728–Ser-754, and Gly-780–Gly-798. Residues Thr-826–Gly-838 are compositionally biased toward gly residues. The span at Ser-846–Gly-864 shows a compositional bias: low complexity. The stretch at His-880–Glu-927 is one Filaggrin 5 repeat. Composition is skewed to polar residues over residues Ala-886–Ser-896 and Ala-912–Phe-925. The span at Glu-973–Val-982 shows a compositional bias: basic and acidic residues. Residues Pro-984–Tyr-1035 form a Filaggrin 6 repeat. Residues Gly-1014–Tyr-1035 show a composition bias toward polar residues. Over residues Glu-1047 to Gln-1059 the composition is skewed to basic and acidic residues. Basic residues predominate over residues Cys-1067 to His-1077. Residues Gly-1104–Pro-1121 show a composition bias toward low complexity. Over residues Ser-1142 to Gln-1152 the composition is skewed to gly residues. Positions His-1162–Asp-1174 are enriched in polar residues. A Filaggrin 7 repeat occupies Gln-1165 to His-1210. Low complexity predominate over residues Ser-1175–Arg-1193. Phosphoserine occurs at positions 1198, 1204, and 1205. Gly residues predominate over residues Ser-1220–Gln-1232. The segment covering Ser-1255–Arg-1273 has biased composition (low complexity). Residues Ser-1278, Ser-1284, and Ser-1285 each carry the phosphoserine modification. The stretch at Val-1280–Ser-1334 is one Filaggrin 8 repeat. Residues Ser-1300–Gln-1310 are compositionally biased toward gly residues. A compositionally biased stretch (low complexity) spans Ser-1333–Arg-1351. Phosphoserine occurs at positions 1356, 1362, and 1363. Residues Glu-1377–His-1396 show a composition bias toward basic and acidic residues. The segment covering Pro-1413–Pro-1436 has biased composition (low complexity). Phosphoserine is present on residues Ser-1438 and Ser-1439. A compositionally biased stretch (gly residues) spans Ser-1454–Gln-1464. The stretch at His-1474–His-1522 is one Filaggrin 9 repeat. The segment covering Ser-1487 to Arg-1505 has biased composition (low complexity). Phosphoserine is present on residues Ser-1510, Ser-1516, and Ser-1517. Gly residues predominate over residues Ser-1532–Gln-1544. The segment covering Ser-1567 to Arg-1585 has biased composition (low complexity). 3 positions are modified to phosphoserine: Ser-1590, Ser-1596, and Ser-1597. Composition is skewed to low complexity over residues Ser-1643–Arg-1661 and Gln-1683–Gln-1696. The segment covering His-1698–His-1708 has biased composition (basic and acidic residues). A Filaggrin 10 repeat occupies Arg-1723–His-1756. The span at Gln-1724–Arg-1739 shows a compositional bias: low complexity. Residues Ser-1744, Ser-1750, Ser-1751, Ser-1824, Ser-1830, and Ser-1831 each carry the phosphoserine modification. The span at Ser-1801–Pro-1825 shows a compositional bias: low complexity. Positions Glu-1829–His-1848 are enriched in basic and acidic residues. Low complexity predominate over residues Ser-1879–Arg-1897. A phosphoserine mark is found at Ser-1902, Ser-1908, and Ser-1909. A compositionally biased stretch (gly residues) spans Ser-1924–Gln-1934. The span at Arg-1949–Arg-1975 shows a compositional bias: low complexity. A phosphoserine mark is found at Ser-1980, Ser-1986, and Ser-1987. Residues Ser-2002–Gln-2012 are compositionally biased toward gly residues. The Filaggrin 11 repeat unit spans residues Gln-2016–Gln-2070. Polar residues-rich tracts occupy residues Gly-2026–Lys-2048, His-2061–His-2079, and Leu-2100–Pro-2109. At Ser-2104 the chain carries Phosphoserine. The stretch at Asp-2218–Leu-2259 is one Filaggrin 12 repeat.

It belongs to the S100-fused protein family. In the N-terminal section; belongs to the S-100 family. Post-translationally, deiminated by PADI1, PADI2 or PADI3 in vitro. The deiminated form is degraded by calpain-1/CAPN1 more quickly and into shorter peptides than the intact protein. In terms of processing, may be processed by calpain-1/CAPN1.

Its subcellular location is the cytoplasm. The protein localises to the cytoplasmic granule. Functionally, essential for normal cell-cell adhesion in the cornified cell layers. Important for proper integrity and mechanical strength of the stratum corneum of the epidermis. The polypeptide is Filaggrin-2 (Flg2) (Mus musculus (Mouse)).